We begin with the raw amino-acid sequence, 231 residues long: E3 ubiquitin-protein ligase At3g02290 (231 aa).

Over residues 103 to 118 the composition is skewed to basic and acidic residues; sequence GSSHSHEEVEPLRSDS. The disordered stretch occupies residues 103-125; the sequence is GSSHSHEEVEPLRSDSDADSESF. The segment at 181-222 adopts an RING-type; atypical zinc-finger fold; it reads CPTCLEEYTSENPKIVTKCSHHFHLSCIYEWMERSENCPVCG.

Its subcellular location is the cytoplasm. The enzyme catalyses S-ubiquitinyl-[E2 ubiquitin-conjugating enzyme]-L-cysteine + [acceptor protein]-L-lysine = [E2 ubiquitin-conjugating enzyme]-L-cysteine + N(6)-ubiquitinyl-[acceptor protein]-L-lysine.. It participates in protein modification; protein ubiquitination. Its function is as follows. Mediates E2-dependent protein ubiquitination. In Arabidopsis thaliana (Mouse-ear cress), this protein is E3 ubiquitin-protein ligase At3g02290.